A 334-amino-acid polypeptide reads, in one-letter code: tRNA uridine(34) hydroxylase (334 aa).

In terms of domain architecture, Rhodanese spans 123 to 217 (SDPDVILVDT…YLEEVKAEES (95 aa)). C177 (cysteine persulfide intermediate) is an active-site residue.

Belongs to the TrhO family.

The enzyme catalyses uridine(34) in tRNA + AH2 + O2 = 5-hydroxyuridine(34) in tRNA + A + H2O. In terms of biological role, catalyzes oxygen-dependent 5-hydroxyuridine (ho5U) modification at position 34 in tRNAs. This chain is tRNA uridine(34) hydroxylase, found in Shewanella baltica (strain OS185).